The following is a 586-amino-acid chain: Protein translocase subunit SecD (586 aa).

A run of 6 helical transmembrane segments spans residues 7–27, 418–438, 439–459, 465–485, 521–541, and 546–566; these read LILILLVTFFACLLIFPTLKW, SALALCLVFLFICVYYGLSGV, VAGFSLVIYNVFLILAILSAF, LTSIAGLILTMGMAVDINIVI, TFIAVLFLTLLGTGVIQGFAW, and GIVASLFSSLIFSRFILEFII.

It belongs to the SecD/SecF family. SecD subfamily. In terms of assembly, forms a complex with SecF. Part of the essential Sec protein translocation apparatus which comprises SecA, SecYEG and auxiliary proteins SecDF. Other proteins may also be involved.

The protein localises to the cell inner membrane. Part of the Sec protein translocase complex. Interacts with the SecYEG preprotein conducting channel. SecDF uses the proton motive force (PMF) to complete protein translocation after the ATP-dependent function of SecA. The protein is Protein translocase subunit SecD of Borreliella burgdorferi (strain ATCC 35210 / DSM 4680 / CIP 102532 / B31) (Borrelia burgdorferi).